The primary structure comprises 247 residues: Ribonuclease 3 (247 aa).

The region spanning His23–Gly149 is the RNase III domain. Glu62 is a Mg(2+) binding site. The active site involves Asp66. Residues Asp135 and Glu138 each coordinate Mg(2+). Residue Glu138 is part of the active site. Residues Asp176–Glu244 enclose the DRBM domain.

Belongs to the ribonuclease III family. As to quaternary structure, homodimer. Requires Mg(2+) as cofactor.

It is found in the cytoplasm. The catalysed reaction is Endonucleolytic cleavage to 5'-phosphomonoester.. In terms of biological role, digests double-stranded RNA. Involved in the processing of primary rRNA transcript to yield the immediate precursors to the large and small rRNAs (23S and 16S). Processes some mRNAs, and tRNAs when they are encoded in the rRNA operon. Processes pre-crRNA and tracrRNA of type II CRISPR loci if present in the organism. This is Ribonuclease 3 from Corynebacterium efficiens (strain DSM 44549 / YS-314 / AJ 12310 / JCM 11189 / NBRC 100395).